The primary structure comprises 329 residues: MSWITPELIEIVVAILKAIVILLVVVVCGALLSFIERRLLGLWQDRYGPNRVGPFGMFQLGADMLKMFFKEDWTPPFADRLIFTLAPIVAMSALLMAFAVVPVTPTWGVADLNIGLLFFFAMAGLAVYAVLFAGWSSNNKFALLGSLRASAQTISYEVFMALALMGIVAQTGSFNMRDIVEYQAQHTWFIIPQFLGFCTFFIAGVAVTHRHPFDQPEAEQELADGYHIEYAGMKWGMFFVGEYIGIVLISALLVTLFFGGWHGPFGILPQLSFIWFALKTAFFIMLFILLRASLPRPRYDQVMAFSWKFCLPLTLLNLLVTGAFVLAAQ.

The next 8 membrane-spanning stretches (helical) occupy residues Ile11–Leu31, Leu81–Val101, Ile114–Gly134, Ile154–Phe174, Thr187–Val207, Phe238–Phe258, Gln270–Leu290, and Phe309–Gln329.

It belongs to the complex I subunit 1 family. As to quaternary structure, NDH-1 is composed of 13 different subunits. Subunits NuoA, H, J, K, L, M, N constitute the membrane sector of the complex.

The protein resides in the cell inner membrane. It catalyses the reaction a quinone + NADH + 5 H(+)(in) = a quinol + NAD(+) + 4 H(+)(out). Its function is as follows. NDH-1 shuttles electrons from NADH, via FMN and iron-sulfur (Fe-S) centers, to quinones in the respiratory chain. The immediate electron acceptor for the enzyme in this species is believed to be ubiquinone. Couples the redox reaction to proton translocation (for every two electrons transferred, four hydrogen ions are translocated across the cytoplasmic membrane), and thus conserves the redox energy in a proton gradient. This subunit may bind ubiquinone. This chain is NADH-quinone oxidoreductase subunit H, found in Azotobacter vinelandii (strain DJ / ATCC BAA-1303).